The sequence spans 637 residues: 1-deoxy-D-xylulose-5-phosphate synthase (637 aa).

Thiamine diphosphate contacts are provided by residues histidine 76 and 117–119; that span reads AHS. Residue aspartate 148 participates in Mg(2+) binding. Thiamine diphosphate contacts are provided by residues 149–150, asparagine 177, tyrosine 287, and glutamate 369; that span reads GA. Asparagine 177 serves as a coordination point for Mg(2+).

It belongs to the transketolase family. DXPS subfamily. As to quaternary structure, homodimer. The cofactor is Mg(2+). It depends on thiamine diphosphate as a cofactor.

The enzyme catalyses D-glyceraldehyde 3-phosphate + pyruvate + H(+) = 1-deoxy-D-xylulose 5-phosphate + CO2. It participates in metabolic intermediate biosynthesis; 1-deoxy-D-xylulose 5-phosphate biosynthesis; 1-deoxy-D-xylulose 5-phosphate from D-glyceraldehyde 3-phosphate and pyruvate: step 1/1. In terms of biological role, catalyzes the acyloin condensation reaction between C atoms 2 and 3 of pyruvate and glyceraldehyde 3-phosphate to yield 1-deoxy-D-xylulose-5-phosphate (DXP). In Pelagibacter ubique (strain HTCC1062), this protein is 1-deoxy-D-xylulose-5-phosphate synthase.